Reading from the N-terminus, the 758-residue chain is Spastin (758 aa).

The interval 1-103 is disordered; it reads MVRTKNQSSS…SPRSGHHHSY (103 aa). The Cytoplasmic segment spans residues 1–121; sequence MVRTKNQSSS…KQNLYVVSFP (121 aa). The interval 1–210 is required for localization to punctate cytoplasmic foci; sequence MVRTKNQSSS…RPIQPLEMAA (210 aa). Composition is skewed to low complexity over residues 8-28, 43-58, 66-76, and 85-95; these read SSSS…SSGA, RSSS…AGGS, SSNRRSPGSSP, and TDDLTPTTCSP. The segment at residues 122–142 is an intramembrane region (helical); it reads IIFLFNVLRSLIYQLFCIFRY. The Cytoplasmic segment spans residues 143-758; it reads LYGASTKVIY…WSQDYGDITI (616 aa). 2 stretches are compositionally biased toward polar residues: residues 169-180 and 189-198; these read SKEQQQSLNHPS and QEQQLSNQPQ. A disordered region spans residues 169 to 202; it reads SKEQQQSLNHPSELNREGDGQEQQLSNQPQRFRP. The segment at 208–758 is sufficient for interaction with microtubules and microtubule severing; sequence MAANRPGGGY…WSQDYGDITI (551 aa). One can recognise an MIT domain in the interval 233–308; sequence HRRAFEYISK…SMARDRLHFL (76 aa). Positions 353–454 are disordered; the sequence is RVRSSGYGPK…GPSGSGASTP (102 aa). Polar residues-rich tracts occupy residues 390–406 and 425–454; these read NKSQ…TSVG and QFSS…ASTP. The interval 443–455 is required for interaction with microtubules; it reads NNGPSGSGASTPV. Residue 523-530 coordinates ATP; the sequence is GPPGNGKT.

The protein belongs to the AAA ATPase family. Spastin subfamily. As to quaternary structure, homohexamer. The homohexamer is stabilized by ATP-binding. The homohexamer may adopt a ring conformation through which microtubules pass prior to being severed. Interacts with microtubules. Interacts with atl; may be involved in microtubule dynamics.

Its subcellular location is the membrane. The protein resides in the cytoplasm. It localises to the cytoskeleton. The protein localises to the microtubule organizing center. It is found in the centrosome. Its subcellular location is the chromosome. The protein resides in the lipid droplet. The enzyme catalyses n ATP + n H2O + a microtubule = n ADP + n phosphate + (n+1) alpha/beta tubulin heterodimers.. Its function is as follows. ATP-dependent microtubule severing protein. Stimulates microtubule minus-end depolymerization and poleward microtubule flux in the mitotic spindle. Regulates microtubule stability in the neuromuscular junction synapse. Involved in lipid metabolism by regulating the size and distribution of lipid droplets. Involved in axon regeneration by regulating microtubule severing. This chain is Spastin, found in Drosophila sechellia (Fruit fly).